Consider the following 229-residue polypeptide: Ribosome maturation factor RimM (229 aa).

The segment at 1–21 (MAGHDSGNAKRGRSPSFGVFV) is disordered. In terms of domain architecture, PRC barrel spans 148-229 (ADEFYWVDLI…RVVVDWEADY (82 aa)).

Belongs to the RimM family. Binds ribosomal protein uS19.

It is found in the cytoplasm. In terms of biological role, an accessory protein needed during the final step in the assembly of 30S ribosomal subunit, possibly for assembly of the head region. Essential for efficient processing of 16S rRNA. May be needed both before and after RbfA during the maturation of 16S rRNA. It has affinity for free ribosomal 30S subunits but not for 70S ribosomes. This chain is Ribosome maturation factor RimM, found in Burkholderia mallei (strain NCTC 10247).